A 445-amino-acid polypeptide reads, in one-letter code: Allantoinase (445 aa).

Residues histidine 63, histidine 65, lysine 150, histidine 186, histidine 238, and aspartate 311 each coordinate Zn(2+). Residue lysine 150 is modified to N6-carboxylysine.

Belongs to the metallo-dependent hydrolases superfamily. Allantoinase family. In terms of assembly, homotetramer. Requires Zn(2+) as cofactor. Post-translationally, carboxylation allows a single lysine to coordinate two zinc ions.

The enzyme catalyses (S)-allantoin + H2O = allantoate + H(+). Its pathway is nitrogen metabolism; (S)-allantoin degradation; allantoate from (S)-allantoin: step 1/1. In terms of biological role, catalyzes the conversion of allantoin (5-ureidohydantoin) to allantoic acid by hydrolytic cleavage of the five-member hydantoin ring. The polypeptide is Allantoinase (Streptomyces avermitilis (strain ATCC 31267 / DSM 46492 / JCM 5070 / NBRC 14893 / NCIMB 12804 / NRRL 8165 / MA-4680)).